Here is a 434-residue protein sequence, read N- to C-terminus: UPF0597 protein CLK_1462 (434 aa).

This sequence belongs to the UPF0597 family.

This chain is UPF0597 protein CLK_1462, found in Clostridium botulinum (strain Loch Maree / Type A3).